We begin with the raw amino-acid sequence, 257 residues long: Snake venom serine proteinase 11 (257 aa).

The N-terminal stretch at 1–18 (MVLIRVLANLLILQLSYA) is a signal peptide. Positions 19-24 (QKSSEL) are excised as a propeptide. Positions 25-248 (VVGGDECNIN…YTEWIQSIIT (224 aa)) constitute a Peptidase S1 domain. Disulfide bonds link C31/C162, C49/C65, C97/C255, C141/C209, C173/C188, and C199/C224. Residues H64 and D109 each act as charge relay system in the active site. N120 carries N-linked (GlcNAc...) asparagine glycosylation. Residue S203 is the Charge relay system of the active site.

It belongs to the peptidase S1 family. Snake venom subfamily. Monomer. Expressed by the venom gland.

The protein resides in the secreted. Snake venom serine protease that may act in the hemostasis system of the prey. The chain is Snake venom serine proteinase 11 from Crotalus adamanteus (Eastern diamondback rattlesnake).